A 227-amino-acid chain; its full sequence is Cytochrome c oxidase subunit 2 (227 aa).

Topologically, residues 1-14 (MAHAAQVGLQDATS) are mitochondrial intermembrane. Residues 15–45 (PIMEELITFHDHALMIIFLICFLVLYALFLT) traverse the membrane as a helical segment. Residues 46–59 (LTTKLTSTNISDAQ) lie on the Mitochondrial matrix side of the membrane. A helical membrane pass occupies residues 60-87 (EMETIWTILPAIILVLIALPSLRILYMT). The Mitochondrial intermembrane portion of the chain corresponds to 88–227 (DEINDPSFTI…IFEMGPVFAL (140 aa)). The Cu cation site is built by His161, Cys196, Glu198, Cys200, His204, and Met207. Glu198 is a binding site for Mg(2+).

Belongs to the cytochrome c oxidase subunit 2 family. Component of the cytochrome c oxidase (complex IV, CIV), a multisubunit enzyme composed of 14 subunits. The complex is composed of a catalytic core of 3 subunits MT-CO1, MT-CO2 and MT-CO3, encoded in the mitochondrial DNA, and 11 supernumerary subunits COX4I, COX5A, COX5B, COX6A, COX6B, COX6C, COX7A, COX7B, COX7C, COX8 and NDUFA4, which are encoded in the nuclear genome. The complex exists as a monomer or a dimer and forms supercomplexes (SCs) in the inner mitochondrial membrane with NADH-ubiquinone oxidoreductase (complex I, CI) and ubiquinol-cytochrome c oxidoreductase (cytochrome b-c1 complex, complex III, CIII), resulting in different assemblies (supercomplex SCI(1)III(2)IV(1) and megacomplex MCI(2)III(2)IV(2)). Found in a complex with TMEM177, COA6, COX18, COX20, SCO1 and SCO2. Interacts with TMEM177 in a COX20-dependent manner. Interacts with COX20. Interacts with COX16. Cu cation is required as a cofactor.

The protein localises to the mitochondrion inner membrane. The enzyme catalyses 4 Fe(II)-[cytochrome c] + O2 + 8 H(+)(in) = 4 Fe(III)-[cytochrome c] + 2 H2O + 4 H(+)(out). Functionally, component of the cytochrome c oxidase, the last enzyme in the mitochondrial electron transport chain which drives oxidative phosphorylation. The respiratory chain contains 3 multisubunit complexes succinate dehydrogenase (complex II, CII), ubiquinol-cytochrome c oxidoreductase (cytochrome b-c1 complex, complex III, CIII) and cytochrome c oxidase (complex IV, CIV), that cooperate to transfer electrons derived from NADH and succinate to molecular oxygen, creating an electrochemical gradient over the inner membrane that drives transmembrane transport and the ATP synthase. Cytochrome c oxidase is the component of the respiratory chain that catalyzes the reduction of oxygen to water. Electrons originating from reduced cytochrome c in the intermembrane space (IMS) are transferred via the dinuclear copper A center (CU(A)) of subunit 2 and heme A of subunit 1 to the active site in subunit 1, a binuclear center (BNC) formed by heme A3 and copper B (CU(B)). The BNC reduces molecular oxygen to 2 water molecules using 4 electrons from cytochrome c in the IMS and 4 protons from the mitochondrial matrix. The polypeptide is Cytochrome c oxidase subunit 2 (MT-CO2) (Gorilla gorilla gorilla (Western lowland gorilla)).